Here is a 240-residue protein sequence, read N- to C-terminus: Uridylate kinase (240 aa).

12-15 (KLSG) provides a ligand contact to ATP. Residues 20 to 25 (GDQGKG) are involved in allosteric activation by GTP. Residue Gly-54 participates in UMP binding. The ATP site is built by Gly-55 and Arg-59. Residues Asp-74 and 135–142 (TGSPYFST) contribute to the UMP site. Residues Asn-163, Tyr-169, and Asp-172 each coordinate ATP.

It belongs to the UMP kinase family. Homohexamer.

Its subcellular location is the cytoplasm. The enzyme catalyses UMP + ATP = UDP + ADP. It participates in pyrimidine metabolism; CTP biosynthesis via de novo pathway; UDP from UMP (UMPK route): step 1/1. With respect to regulation, allosterically activated by GTP. Inhibited by UTP. In terms of biological role, catalyzes the reversible phosphorylation of UMP to UDP. The protein is Uridylate kinase of Ligilactobacillus salivarius (strain UCC118) (Lactobacillus salivarius).